The chain runs to 120 residues: NAD(P)H-quinone oxidoreductase subunit 3, chloroplastic (120 aa).

Transmembrane regions (helical) follow at residues 9–29 (IFWA…IISG), 60–80 (ICYY…VFLY), and 88–108 (ILGV…IVGS).

It belongs to the complex I subunit 3 family. As to quaternary structure, NDH is composed of at least 16 different subunits, 5 of which are encoded in the nucleus.

The protein resides in the plastid. The protein localises to the chloroplast thylakoid membrane. The enzyme catalyses a plastoquinone + NADH + (n+1) H(+)(in) = a plastoquinol + NAD(+) + n H(+)(out). The catalysed reaction is a plastoquinone + NADPH + (n+1) H(+)(in) = a plastoquinol + NADP(+) + n H(+)(out). Its function is as follows. NDH shuttles electrons from NAD(P)H:plastoquinone, via FMN and iron-sulfur (Fe-S) centers, to quinones in the photosynthetic chain and possibly in a chloroplast respiratory chain. The immediate electron acceptor for the enzyme in this species is believed to be plastoquinone. Couples the redox reaction to proton translocation, and thus conserves the redox energy in a proton gradient. The polypeptide is NAD(P)H-quinone oxidoreductase subunit 3, chloroplastic (Morus indica (Mulberry)).